The sequence spans 1088 residues: RNA-directed RNA polymerase (1088 aa).

Residues 501 to 687 form the RdRp catalytic domain; it reads LSYGDVTRFL…AKRYIAGGKI (187 aa).

It belongs to the reoviridae RNA-directed RNA polymerase family. Interacts with VP3 (Potential). Interacts with VP2; this interaction activates VP1. Interacts with NSP5; this interaction is probably necessary for the formation of functional virus factories. Interacts with NSP2; this interaction is weak. It depends on Mg(2+) as a cofactor.

Its subcellular location is the virion. It catalyses the reaction RNA(n) + a ribonucleoside 5'-triphosphate = RNA(n+1) + diphosphate. Functionally, RNA-directed RNA polymerase that is involved in both transcription and genome replication. Together with VP3 capping enzyme, forms an enzyme complex positioned near the channels situated at each of the five-fold vertices of the core. Following infection, the outermost layer of the virus is lost, leaving a double-layered particle (DLP) made up of the core and VP6 shell. VP1 then catalyzes the transcription of fully conservative plus-strand genomic RNAs that are extruded through the DLP's channels into the cytoplasm where they function as mRNAs for translation of viral proteins. One copy of each of the viral (+)RNAs is also recruited during core assembly, together with newly synthesized polymerase complexes and VP2. The polymerase of these novo-formed particles catalyzes the synthesis of complementary minus-strands leading to dsRNA formation. To do so, the polymerase specifically recognizes and binds 4 bases 5'-UGUG-3' in the conserved 3'-sequence of plus-strand RNA templates. VP2 presumably activates the autoinhibited VP1-RNA complex to coordinate packaging and genome replication. Once dsRNA synthesis is complete, the polymerase switches to the transcriptional mode, thus providing secondary transcription. The chain is RNA-directed RNA polymerase from Rotavirus A (strain RVA/Human/United States/Wa/1974/G1P1A[8]) (RV-A).